The primary structure comprises 421 residues: Gamma-glutamyl phosphate reductase (421 aa).

The protein belongs to the gamma-glutamyl phosphate reductase family.

Its subcellular location is the cytoplasm. The enzyme catalyses L-glutamate 5-semialdehyde + phosphate + NADP(+) = L-glutamyl 5-phosphate + NADPH + H(+). It participates in amino-acid biosynthesis; L-proline biosynthesis; L-glutamate 5-semialdehyde from L-glutamate: step 2/2. Catalyzes the NADPH-dependent reduction of L-glutamate 5-phosphate into L-glutamate 5-semialdehyde and phosphate. The product spontaneously undergoes cyclization to form 1-pyrroline-5-carboxylate. This chain is Gamma-glutamyl phosphate reductase, found in Acinetobacter baumannii (strain ACICU).